The primary structure comprises 266 residues: UPF0246 protein PHZ_c0561 (266 aa).

The disordered stretch occupies residues 245 to 266 (DEEFTFARPQPPPPAASRNKED).

This sequence belongs to the UPF0246 family.

The sequence is that of UPF0246 protein PHZ_c0561 from Phenylobacterium zucineum (strain HLK1).